Consider the following 344-residue polypeptide: Uroporphyrinogen decarboxylase (344 aa).

Substrate is bound by residues arginine 23–arginine 27, aspartate 73, tyrosine 149, threonine 204, and histidine 321.

It belongs to the uroporphyrinogen decarboxylase family. In terms of assembly, homodimer.

The protein localises to the cytoplasm. It carries out the reaction uroporphyrinogen III + 4 H(+) = coproporphyrinogen III + 4 CO2. The protein operates within porphyrin-containing compound metabolism; protoporphyrin-IX biosynthesis; coproporphyrinogen-III from 5-aminolevulinate: step 4/4. Catalyzes the decarboxylation of four acetate groups of uroporphyrinogen-III to yield coproporphyrinogen-III. The protein is Uroporphyrinogen decarboxylase of Francisella tularensis subsp. mediasiatica (strain FSC147).